Consider the following 454-residue polypeptide: 3-phosphoshikimate 1-carboxyvinyltransferase (454 aa).

3-phosphoshikimate-binding residues include K39, S40, and R44. Residue K39 coordinates phosphoenolpyruvate. Residues G112 and R140 each contribute to the phosphoenolpyruvate site. 3-phosphoshikimate is bound by residues S185, Q187, D333, and K360. Q187 provides a ligand contact to phosphoenolpyruvate. D333 acts as the Proton acceptor in catalysis. Residues R364 and R405 each coordinate phosphoenolpyruvate.

This sequence belongs to the EPSP synthase family. As to quaternary structure, monomer.

Its subcellular location is the cytoplasm. The catalysed reaction is 3-phosphoshikimate + phosphoenolpyruvate = 5-O-(1-carboxyvinyl)-3-phosphoshikimate + phosphate. It functions in the pathway metabolic intermediate biosynthesis; chorismate biosynthesis; chorismate from D-erythrose 4-phosphate and phosphoenolpyruvate: step 6/7. Catalyzes the transfer of the enolpyruvyl moiety of phosphoenolpyruvate (PEP) to the 5-hydroxyl of shikimate-3-phosphate (S3P) to produce enolpyruvyl shikimate-3-phosphate and inorganic phosphate. This is 3-phosphoshikimate 1-carboxyvinyltransferase from Xylella fastidiosa (strain 9a5c).